The chain runs to 427 residues: Serine--tRNA ligase (427 aa).

231–233 lines the L-serine pocket; sequence TAE. 262–264 is a binding site for ATP; that stretch reads RSE. Glu-285 contacts L-serine. 349-352 contacts ATP; the sequence is EISS. Ser-385 is an L-serine binding site.

The protein belongs to the class-II aminoacyl-tRNA synthetase family. Type-1 seryl-tRNA synthetase subfamily. In terms of assembly, homodimer. The tRNA molecule binds across the dimer.

Its subcellular location is the cytoplasm. It catalyses the reaction tRNA(Ser) + L-serine + ATP = L-seryl-tRNA(Ser) + AMP + diphosphate + H(+). The catalysed reaction is tRNA(Sec) + L-serine + ATP = L-seryl-tRNA(Sec) + AMP + diphosphate + H(+). It participates in aminoacyl-tRNA biosynthesis; selenocysteinyl-tRNA(Sec) biosynthesis; L-seryl-tRNA(Sec) from L-serine and tRNA(Sec): step 1/1. Catalyzes the attachment of serine to tRNA(Ser). Is also able to aminoacylate tRNA(Sec) with serine, to form the misacylated tRNA L-seryl-tRNA(Sec), which will be further converted into selenocysteinyl-tRNA(Sec). This chain is Serine--tRNA ligase, found in Rhizobium leguminosarum bv. trifolii (strain WSM2304).